The primary structure comprises 461 residues: Siroheme synthase (461 aa).

The interval M1 to V204 is precorrin-2 dehydrogenase /sirohydrochlorin ferrochelatase. NAD(+) contacts are provided by residues E22–V23 and G43–R44. At S128 the chain carries Phosphoserine. A uroporphyrinogen-III C-methyltransferase region spans residues G216–A461. P225 lines the S-adenosyl-L-methionine pocket. D248 (proton acceptor) is an active-site residue. Catalysis depends on K270, which acts as the Proton donor. S-adenosyl-L-methionine-binding positions include G301–D303, I306, T331–A332, M382, and G411.

This sequence in the N-terminal section; belongs to the precorrin-2 dehydrogenase / sirohydrochlorin ferrochelatase family. The protein in the C-terminal section; belongs to the precorrin methyltransferase family.

The enzyme catalyses uroporphyrinogen III + 2 S-adenosyl-L-methionine = precorrin-2 + 2 S-adenosyl-L-homocysteine + H(+). The catalysed reaction is precorrin-2 + NAD(+) = sirohydrochlorin + NADH + 2 H(+). It catalyses the reaction siroheme + 2 H(+) = sirohydrochlorin + Fe(2+). It participates in cofactor biosynthesis; adenosylcobalamin biosynthesis; precorrin-2 from uroporphyrinogen III: step 1/1. Its pathway is cofactor biosynthesis; adenosylcobalamin biosynthesis; sirohydrochlorin from precorrin-2: step 1/1. It functions in the pathway porphyrin-containing compound metabolism; siroheme biosynthesis; precorrin-2 from uroporphyrinogen III: step 1/1. The protein operates within porphyrin-containing compound metabolism; siroheme biosynthesis; siroheme from sirohydrochlorin: step 1/1. It participates in porphyrin-containing compound metabolism; siroheme biosynthesis; sirohydrochlorin from precorrin-2: step 1/1. Functionally, multifunctional enzyme that catalyzes the SAM-dependent methylations of uroporphyrinogen III at position C-2 and C-7 to form precorrin-2 via precorrin-1. Then it catalyzes the NAD-dependent ring dehydrogenation of precorrin-2 to yield sirohydrochlorin. Finally, it catalyzes the ferrochelation of sirohydrochlorin to yield siroheme. This is Siroheme synthase from Edwardsiella ictaluri (strain 93-146).